The primary structure comprises 92 residues: RNA-binding protein Hfq (92 aa).

A Sm domain is found at 10-71 (DLFLNQLRKE…ISSIMPSKPI (62 aa)). Residues 73–92 (YMAQAQNNQQASQQSNNNQG) form a disordered region. The span at 75-92 (AQAQNNQQASQQSNNNQG) shows a compositional bias: low complexity.

The protein belongs to the Hfq family. As to quaternary structure, homohexamer.

In terms of biological role, RNA chaperone that binds small regulatory RNA (sRNAs) and mRNAs to facilitate mRNA translational regulation in response to envelope stress, environmental stress and changes in metabolite concentrations. Also binds with high specificity to tRNAs. This is RNA-binding protein Hfq from Caldicellulosiruptor bescii (strain ATCC BAA-1888 / DSM 6725 / KCTC 15123 / Z-1320) (Anaerocellum thermophilum).